A 224-amino-acid chain; its full sequence is Deoxyribose-phosphate aldolase (224 aa).

Residue aspartate 92 is the Proton donor/acceptor of the active site. The Schiff-base intermediate with acetaldehyde role is filled by lysine 155. Residue lysine 184 is the Proton donor/acceptor of the active site.

This sequence belongs to the DeoC/FbaB aldolase family. DeoC type 1 subfamily.

The protein localises to the cytoplasm. The catalysed reaction is 2-deoxy-D-ribose 5-phosphate = D-glyceraldehyde 3-phosphate + acetaldehyde. The protein operates within carbohydrate degradation; 2-deoxy-D-ribose 1-phosphate degradation; D-glyceraldehyde 3-phosphate and acetaldehyde from 2-deoxy-alpha-D-ribose 1-phosphate: step 2/2. Catalyzes a reversible aldol reaction between acetaldehyde and D-glyceraldehyde 3-phosphate to generate 2-deoxy-D-ribose 5-phosphate. The chain is Deoxyribose-phosphate aldolase from Clostridium perfringens (strain SM101 / Type A).